The sequence spans 123 residues: Large ribosomal subunit protein bL12 (123 aa).

It belongs to the bacterial ribosomal protein bL12 family. As to quaternary structure, homodimer. Part of the ribosomal stalk of the 50S ribosomal subunit. Forms a multimeric L10(L12)X complex, where L10 forms an elongated spine to which 2 to 4 L12 dimers bind in a sequential fashion. Binds GTP-bound translation factors.

Forms part of the ribosomal stalk which helps the ribosome interact with GTP-bound translation factors. Is thus essential for accurate translation. The polypeptide is Large ribosomal subunit protein bL12 (Mycoplasmopsis agalactiae (strain NCTC 10123 / CIP 59.7 / PG2) (Mycoplasma agalactiae)).